Reading from the N-terminus, the 504-residue chain is Tyrosine-protein phosphatase non-receptor type substrate 1 (504 aa).

The first 30 residues, methionine 1–glycine 30, serve as a signal peptide directing secretion. The Extracellular portion of the chain corresponds to glutamate 31 to tyrosine 373. In terms of domain architecture, Ig-like V-type spans glutamate 32–glycine 137. 2 cysteine pairs are disulfide-bonded: cysteine 55-cysteine 121 and cysteine 170-cysteine 228. 2 consecutive Ig-like C1-type domains span residues proline 148–serine 247 and proline 254–lysine 348. Residues asparagine 245, asparagine 270, asparagine 292, and asparagine 319 are each glycosylated (N-linked (GlcNAc...) asparagine). Residues cysteine 273 and cysteine 331 are joined by a disulfide bond. Residues aspartate 336–glutamate 355 are compositionally biased toward basic and acidic residues. Residues aspartate 336 to asparagine 364 are disordered. Residues isoleucine 374–valine 394 traverse the membrane as a helical segment. At arginine 395–lysine 504 the chain is on the cytoplasmic side. Positions glutamine 402–lysine 504 are disordered. The segment covering arginine 409–threonine 421 has biased composition (basic and acidic residues). A Phosphotyrosine; by Tyr-kinases modification is found at tyrosine 429. The SH2-binding signature appears at tyrosine 429 to leucine 432. The SH3-binding signature appears at lysine 439–alanine 444. Over residues glutamate 446 to threonine 467 the composition is skewed to polar residues. 2 positions are modified to phosphotyrosine; by Tyr-kinases: tyrosine 453 and tyrosine 470. Short sequence motifs (SH2-binding) lie at residues tyrosine 453–isoleucine 456, tyrosine 470–leucine 473, and tyrosine 496–valine 499. At tyrosine 496 the chain carries Phosphotyrosine.

In terms of assembly, binds PTPN11 when tyrosine-phosphorylated, except in macrophages, where it primarily binds PTPN6. Binds GRB2 in vitro. Binds FGR. Binds JAK2 irrespective of its phosphorylation status and forms a stable complex. Binds SCAP1 and/or SCAP2. The resulting complex recruits FYB1. Binds PTK2B. Interacts with TRIM2. N-glycosylated. In terms of processing, phosphorylated on tyrosine residues in response to stimulation with EGF, growth hormone, insulin and PDGF. Dephosphorylated by PTPN11. Ubiquitous. Highly expressed in brain. Detected on myeloid cells, but not T-cells. Detected at lower levels in heart, placenta, lung, testis, ovary, colon, liver, small intestine, prostate, spleen, kidney, skeletal muscle and pancreas.

It is found in the membrane. In terms of biological role, immunoglobulin-like cell surface receptor for CD47. Acts as docking protein and induces translocation of PTPN6, PTPN11 and other binding partners from the cytosol to the plasma membrane. Supports adhesion of cerebellar neurons, neurite outgrowth and glial cell attachment. May play a key role in intracellular signaling during synaptogenesis and in synaptic function. Involved in the negative regulation of receptor tyrosine kinase-coupled cellular responses induced by cell adhesion, growth factors or insulin. Mediates negative regulation of phagocytosis, mast cell activation and dendritic cell activation. CD47 binding prevents maturation of immature dendritic cells and inhibits cytokine production by mature dendritic cells. Plays a role in antiviral immunity and limits new world arenavirus infection by decreasing virus internalization. Receptor for THBS1. Interaction with THBS1 stimulates phosphorylation of SIRPA. In response to THBS1, involved in ROS signaling in non-phagocytic cells, stimulating NADPH oxidase-derived ROS production. This Homo sapiens (Human) protein is Tyrosine-protein phosphatase non-receptor type substrate 1 (SIRPA).